Here is a 174-residue protein sequence, read N- to C-terminus: Peptide deformylase (174 aa).

Residues Cys-96 and His-138 each coordinate Fe cation. Residue Glu-139 is part of the active site. A Fe cation-binding site is contributed by His-142.

It belongs to the polypeptide deformylase family. The cofactor is Fe(2+).

It catalyses the reaction N-terminal N-formyl-L-methionyl-[peptide] + H2O = N-terminal L-methionyl-[peptide] + formate. Its function is as follows. Removes the formyl group from the N-terminal Met of newly synthesized proteins. Requires at least a dipeptide for an efficient rate of reaction. N-terminal L-methionine is a prerequisite for activity but the enzyme has broad specificity at other positions. The polypeptide is Peptide deformylase (Helicobacter pylori (strain P12)).